Reading from the N-terminus, the 421-residue chain is Acetate kinase (421 aa).

Asn7 lines the Mg(2+) pocket. ATP is bound at residue Lys14. Position 91 (Arg91) interacts with substrate. The active-site Proton donor/acceptor is Asp148. Residues 208–212 and 283–285 contribute to the ATP site; these read HIGNG and DRR. Glu387 serves as a coordination point for Mg(2+).

It belongs to the acetokinase family. Homodimer. It depends on Mg(2+) as a cofactor. The cofactor is Mn(2+).

It is found in the cytoplasm. It catalyses the reaction acetate + ATP = acetyl phosphate + ADP. The protein operates within metabolic intermediate biosynthesis; acetyl-CoA biosynthesis; acetyl-CoA from acetate: step 1/2. Catalyzes the formation of acetyl phosphate from acetate and ATP. Can also catalyze the reverse reaction. This Geobacter sulfurreducens (strain ATCC 51573 / DSM 12127 / PCA) protein is Acetate kinase.